We begin with the raw amino-acid sequence, 166 residues long: MSEAIIAKKAEQVELIAEKMKAAASIVVVDSRGLTVDQDTVLRRSLRESGVEFKVIKNSILTRAAEKAGLDELKDVFVGPSAVAFSNEDVIAPAKVINDFTKTADALEIKGGAIEGAVSSKEEIQALATLPNRQGMLSMLLSVLQAPVRNVAYAVKAVAENKEGAA.

Belongs to the universal ribosomal protein uL10 family. Part of the ribosomal stalk of the 50S ribosomal subunit. The N-terminus interacts with L11 and the large rRNA to form the base of the stalk. The C-terminus forms an elongated spine to which L12 dimers bind in a sequential fashion forming a multimeric L10(L12)X complex.

Its function is as follows. Forms part of the ribosomal stalk, playing a central role in the interaction of the ribosome with GTP-bound translation factors. This Streptococcus pyogenes serotype M18 (strain MGAS8232) protein is Large ribosomal subunit protein uL10 (rplJ).